A 351-amino-acid chain; its full sequence is Flagellin (351 aa).

This sequence belongs to the bacterial flagellin family.

It localises to the secreted. The protein localises to the bacterial flagellum. Its function is as follows. Flagellin is the subunit protein which polymerizes to form the filaments of bacterial flagella. In Serratia marcescens, this protein is Flagellin (fliC).